The chain runs to 243 residues: UPF0758 protein sll0766 (243 aa).

Positions 113 to 235 (VVDSPEAAAI…HQSLRQCTDL (123 aa)) constitute an MPN domain. Residues histidine 184, histidine 186, and aspartate 197 each coordinate Zn(2+). Residues 184-197 (HNHPSGGLEPSPED) carry the JAMM motif motif.

Belongs to the UPF0758 family.

In Synechocystis sp. (strain ATCC 27184 / PCC 6803 / Kazusa), this protein is UPF0758 protein sll0766.